The following is a 270-amino-acid chain: Formamidopyrimidine-DNA glycosylase (270 aa).

Pro2 functions as the Schiff-base intermediate with DNA in the catalytic mechanism. The Proton donor role is filled by Glu3. Residue Lys57 is the Proton donor; for beta-elimination activity of the active site. DNA is bound by residues His90, Arg109, and Arg151. The segment at 236 to 270 adopts an FPG-type zinc-finger fold; it reads QVYGRGGKLCMVCSNRLKEVRLGQRSTVYCTQCQR. Catalysis depends on Arg260, which acts as the Proton donor; for delta-elimination activity.

It belongs to the FPG family. As to quaternary structure, monomer. Zn(2+) is required as a cofactor.

The enzyme catalyses Hydrolysis of DNA containing ring-opened 7-methylguanine residues, releasing 2,6-diamino-4-hydroxy-5-(N-methyl)formamidopyrimidine.. It catalyses the reaction 2'-deoxyribonucleotide-(2'-deoxyribose 5'-phosphate)-2'-deoxyribonucleotide-DNA = a 3'-end 2'-deoxyribonucleotide-(2,3-dehydro-2,3-deoxyribose 5'-phosphate)-DNA + a 5'-end 5'-phospho-2'-deoxyribonucleoside-DNA + H(+). Involved in base excision repair of DNA damaged by oxidation or by mutagenic agents. Acts as a DNA glycosylase that recognizes and removes damaged bases. Has a preference for oxidized purines, such as 7,8-dihydro-8-oxoguanine (8-oxoG). Has AP (apurinic/apyrimidinic) lyase activity and introduces nicks in the DNA strand. Cleaves the DNA backbone by beta-delta elimination to generate a single-strand break at the site of the removed base with both 3'- and 5'-phosphates. The chain is Formamidopyrimidine-DNA glycosylase from Idiomarina loihiensis (strain ATCC BAA-735 / DSM 15497 / L2-TR).